Reading from the N-terminus, the 306-residue chain is Anamorsin homolog (306 aa).

Positions 1 to 25 (MVPPREDVTVRIVCERRRTAGKEAR) are enriched in basic and acidic residues. Residues 1 to 51 (MVPPREDVTVRIVCERRRTAGKEARPPPSAKPTPGNTSSHPNAKETHRSNE) form a disordered region. The interval 59–190 (KQSHRRSIMA…RRNNTTNSVA (132 aa)) is N-terminal SAM-like domain. A linker region spans residues 191-218 (TLNFASNNNNGNDLLIDEDNLLTDASNL). [2Fe-2S] cluster is bound by residues cysteine 236, cysteine 242, cysteine 245, and cysteine 247. Positions 236–247 (CSGRAPCDDCTC) are fe-S binding site A. Positions 252-265 (GAKEGNSEQPKEIK) are enriched in basic and acidic residues. The interval 252–272 (GAKEGNSEQPKEIKSSSCGKC) is disordered. The [4Fe-4S] cluster site is built by cysteine 269, cysteine 272, cysteine 280, and cysteine 283. 2 consecutive short sequence motifs (cx2C motif) follow at residues 269-272 (CGKC) and 280-283 (CASC). Positions 269–283 (CGKCSLGDAFRCASC) are fe-S binding site B.

This sequence belongs to the anamorsin family. Monomer. It depends on [2Fe-2S] cluster as a cofactor. Requires [4Fe-4S] cluster as cofactor.

It is found in the cytoplasm. The protein localises to the mitochondrion intermembrane space. In terms of biological role, component of the cytosolic iron-sulfur (Fe-S) protein assembly (CIA) machinery. Required for the maturation of extramitochondrial Fe-S proteins. Part of an electron transfer chain functioning in an early step of cytosolic Fe-S biogenesis, facilitating the de novo assembly of a [4Fe-4S] cluster on the cytosolic Fe-S scaffold complex. Electrons are transferred from NADPH via a FAD- and FMN-containing diflavin oxidoreductase. Together with the diflavin oxidoreductase, also required for the assembly of the diferric tyrosyl radical cofactor of ribonucleotide reductase (RNR), probably by providing electrons for reduction during radical cofactor maturation in the catalytic small subunit. The sequence is that of Anamorsin homolog from Phaeodactylum tricornutum (strain CCAP 1055/1).